The sequence spans 335 residues: Tryptophan--tRNA ligase (335 aa).

ATP contacts are provided by residues 19-21 (QPS) and 28-29 (GN). A 'HIGH' region motif is present at residues 20–29 (PSSGMLHLGN). Position 143 (Asp143) interacts with L-tryptophan. ATP is bound by residues 155 to 157 (GAD), Ile192, and 201 to 205 (KMSKS). The 'KMSKS' region motif lies at 201 to 205 (KMSKS).

The protein belongs to the class-I aminoacyl-tRNA synthetase family. In terms of assembly, homodimer.

It is found in the cytoplasm. The enzyme catalyses tRNA(Trp) + L-tryptophan + ATP = L-tryptophyl-tRNA(Trp) + AMP + diphosphate + H(+). Functionally, catalyzes the attachment of tryptophan to tRNA(Trp). The chain is Tryptophan--tRNA ligase from Tropheryma whipplei (strain Twist) (Whipple's bacillus).